Here is a 229-residue protein sequence, read N- to C-terminus: Potassium/proton antiporter CemA (229 aa).

Helical transmembrane passes span Phe-7–Phe-27, Met-106–Leu-126, Ile-154–Ile-174, and Ile-189–Ile-209.

This sequence belongs to the CemA family.

The protein localises to the plastid. It localises to the chloroplast inner membrane. The enzyme catalyses K(+)(in) + H(+)(out) = K(+)(out) + H(+)(in). Functionally, contributes to K(+)/H(+) antiport activity by supporting proton efflux to control proton extrusion and homeostasis in chloroplasts in a light-dependent manner to modulate photosynthesis. Prevents excessive induction of non-photochemical quenching (NPQ) under continuous-light conditions. Indirectly promotes efficient inorganic carbon uptake into chloroplasts. In Spinacia oleracea (Spinach), this protein is Potassium/proton antiporter CemA.